Consider the following 145-residue polypeptide: Brain and acute leukemia cytoplasmic protein (145 aa).

Glycine 2 is lipidated: N-myristoyl glycine. Cysteine 3 is lipidated: S-palmitoyl cysteine. The segment at 3–35 (CGGSRADAIEPRYYESWTRETESTWLTYTDSDA) is interaction with CAMK2A. Residues 36 to 113 (LPSAAATDSG…GLWTTEAKRD (78 aa)) are disordered. Polar residues predominate over residues 83–106 (CGTQCPNSQSLSSGPLTQKQNGLW).

In terms of assembly, interacts with CAMK2A. In terms of processing, palmitoylation and myristoylation target the protein to the lipid rafts. As to expression, predominantly expressed in the brain (at protein level). Within the brain, found in most of forebrain structures, including the cerebral cortex, hippocampal formation, olfactory bulb, anterior olfactory nuclei, piriform cortex, tenia tecta and amygdaloid nuclei. Not detected in glial cells.

It is found in the cytoplasm. Its subcellular location is the synapse. The protein resides in the synaptosome. The protein localises to the membrane raft. It localises to the postsynaptic density. May play a synaptic role at the postsynaptic lipid rafts possibly through interaction with CAMK2A. This is Brain and acute leukemia cytoplasmic protein (Baalc) from Rattus norvegicus (Rat).